A 153-amino-acid chain; its full sequence is SsrA-binding protein (153 aa).

The protein belongs to the SmpB family.

The protein localises to the cytoplasm. Required for rescue of stalled ribosomes mediated by trans-translation. Binds to transfer-messenger RNA (tmRNA), required for stable association of tmRNA with ribosomes. tmRNA and SmpB together mimic tRNA shape, replacing the anticodon stem-loop with SmpB. tmRNA is encoded by the ssrA gene; the 2 termini fold to resemble tRNA(Ala) and it encodes a 'tag peptide', a short internal open reading frame. During trans-translation Ala-aminoacylated tmRNA acts like a tRNA, entering the A-site of stalled ribosomes, displacing the stalled mRNA. The ribosome then switches to translate the ORF on the tmRNA; the nascent peptide is terminated with the 'tag peptide' encoded by the tmRNA and targeted for degradation. The ribosome is freed to recommence translation, which seems to be the essential function of trans-translation. This Orientia tsutsugamushi (strain Boryong) (Rickettsia tsutsugamushi) protein is SsrA-binding protein.